The following is a 277-amino-acid chain: Large ribosomal subunit protein uL2 (277 aa).

Disordered regions lie at residues 37 to 58 (LHSK…GGGH) and 222 to 277 (GVAM…NRRR). Positions 268–277 (VRRRKQNRRR) are enriched in basic residues.

Belongs to the universal ribosomal protein uL2 family. Part of the 50S ribosomal subunit. Forms a bridge to the 30S subunit in the 70S ribosome.

Its function is as follows. One of the primary rRNA binding proteins. Required for association of the 30S and 50S subunits to form the 70S ribosome, for tRNA binding and peptide bond formation. It has been suggested to have peptidyltransferase activity; this is somewhat controversial. Makes several contacts with the 16S rRNA in the 70S ribosome. This chain is Large ribosomal subunit protein uL2, found in Parafrankia sp. (strain EAN1pec).